The following is a 549-amino-acid chain: Glutamyl-tRNA(Gln) amidotransferase subunit B, mitochondrial (549 aa).

The N-terminal 23 residues, 1–23 (MLRISRDTKIVARVTHVTKSRTY), are a transit peptide targeting the mitochondrion.

The protein belongs to the GatB/GatE family. GatB subfamily. In terms of assembly, subunit of the heterotrimeric GatFAB amidotransferase (AdT) complex, composed of A, B and F subunits.

It is found in the mitochondrion. It catalyses the reaction L-glutamyl-tRNA(Gln) + L-glutamine + ATP + H2O = L-glutaminyl-tRNA(Gln) + L-glutamate + ADP + phosphate + H(+). Its function is as follows. Allows the formation of correctly charged Gln-tRNA(Gln) through the transamidation of misacylated Glu-tRNA(Gln) in the mitochondria. The reaction takes place in the presence of glutamine and ATP through an activated gamma-phospho-Glu-tRNA(Gln). The protein is Glutamyl-tRNA(Gln) amidotransferase subunit B, mitochondrial of Yarrowia lipolytica (strain CLIB 122 / E 150) (Yeast).